The chain runs to 776 residues: Glutathione biosynthesis bifunctional protein GshAB (776 aa).

The tract at residues 1 to 354 (MIKLDMTILD…QLADENENNI (354 aa)) is glutamate--cysteine ligase. The ATP-grasp domain maps to 521–775 (KLVLAENNIR…IGDKILDFLF (255 aa)). 548 to 606 (SLFKDKQIVVKPKSTNYGWGISIFKNKFTTEDYQEALNIAFSYDSSVIIEEFIPGDEFR) lines the ATP pocket. Positions 728, 745, and 747 each coordinate Mg(2+). Residues Asp-728, Glu-745, and Asn-747 each coordinate Mn(2+).

In the N-terminal section; belongs to the glutamate--cysteine ligase type 1 family. Type 2 subfamily. In terms of assembly, monomer. It depends on Mg(2+) as a cofactor. Mn(2+) is required as a cofactor.

It catalyses the reaction L-cysteine + L-glutamate + ATP = gamma-L-glutamyl-L-cysteine + ADP + phosphate + H(+). The catalysed reaction is gamma-L-glutamyl-L-cysteine + glycine + ATP = glutathione + ADP + phosphate + H(+). It functions in the pathway sulfur metabolism; glutathione biosynthesis; glutathione from L-cysteine and L-glutamate: step 1/2. The protein operates within sulfur metabolism; glutathione biosynthesis; glutathione from L-cysteine and L-glutamate: step 2/2. Functionally, synthesizes glutathione from L-glutamate and L-cysteine via gamma-L-glutamyl-L-cysteine. This is Glutathione biosynthesis bifunctional protein GshAB from Listeria welshimeri serovar 6b (strain ATCC 35897 / DSM 20650 / CCUG 15529 / CIP 8149 / NCTC 11857 / SLCC 5334 / V8).